Here is a 398-residue protein sequence, read N- to C-terminus: Cyclic GMP-AMP synthase-like receptor (398 aa).

ATP-binding positions include S57 and 69-71; that span reads EFD. Mg(2+) contacts are provided by E69, D71, and D192. Residues D192 and 240–247 contribute to the GTP site; that span reads SLSFQEQE. ATP contacts are provided by residues 244–247, K265, and 277–281; these read QEQE and SYYIK. 3 residues coordinate Mn(2+): I288, E289, and D292.

This sequence belongs to the mab-21 family. Mg(2+) serves as cofactor. The cofactor is Mn(2+).

The enzyme catalyses GTP + ATP = 2',3'-cGAMP + 2 diphosphate. It catalyses the reaction GTP + ATP = pppGp(2'-5')A + diphosphate. The catalysed reaction is pppGp(2'-5')A = 2',3'-cGAMP + diphosphate. With respect to regulation, the enzyme activity is specifically activated by double-stranded RNA (dsRNA). Its function is as follows. Nucleotidyltransferase that catalyzes the formation of cyclic GMP-AMP (2',3'-cGAMP) from ATP and GTP and plays a key role in innate immunity. Acts as a key sensor of double-stranded RNA (dsRNA), the presence of dsRNA in the cytoplasm being a danger signal that triggers the immune responses. Directly binds dsRNA, activating the nucleotidyltransferase activity, leading to synthesis of 2',3'-cGAMP, a second messenger that binds to and activates Sting, thereby triggering the antiviral immune response via activation of the NF-kappa-B transcription factor Rel (Relish). The polypeptide is Cyclic GMP-AMP synthase-like receptor (Tribolium castaneum (Red flour beetle)).